A 340-amino-acid chain; its full sequence is Lipopolysaccharide heptosyltransferase 3 (340 aa).

Belongs to the glycosyltransferase 9 family.

It carries out the reaction an L-alpha-D-Hep-(1-&gt;3)-4-O-phospho-L-alpha-D-Hep-(1-&gt;5)-[alpha-Kdo-(2-&gt;4)]-alpha-Kdo-(2-&gt;6)-lipid A + ADP-L-glycero-beta-D-manno-heptose = an L-alpha-D-Hep-(1-&gt;7)-L-alpha-D-Hep-(1-&gt;3)-4-O-phospho-L-alpha-D-Hep-(1-&gt;5)-[alpha-Kdo-(2-&gt;4)]-alpha-Kdo-(2-&gt;6)-lipid A + ADP + H(+). The enzyme catalyses L-alpha-D-Hep-(1-&gt;3)-4-O-phospho-L-alpha-D-Hep-(1-&gt;5)-[alpha-Kdo-(2-&gt;4)]-alpha-Kdo-(2-&gt;6)-lipid A (E. coli) + ADP-L-glycero-beta-D-manno-heptose = L-alpha-D-Hep-(1-&gt;7)-L-alpha-D-Hep-(1-&gt;3)-4-O-phospho-L-alpha-D-Hep-(1-&gt;5)-[alpha-Kdo-(2-&gt;4)]-alpha-Kdo-(2-&gt;6)-lipid A (E. coli) + ADP + H(+). Its pathway is bacterial outer membrane biogenesis; LPS core biosynthesis. Its function is as follows. Glycosyltransferase involved in the biosynthesis of the core oligosaccharide region of lipopolysaccharide (LPS). Catalyzes the addition of the third heptose unit (HepIII) to the second heptose unit (HepII) of the phospho-Hep2-Kdo2-lipid A module. The transfer of HepIII seems to be a prerequisite to the phosphorylation of the second heptose unit. In Escherichia coli, this protein is Lipopolysaccharide heptosyltransferase 3.